Reading from the N-terminus, the 1071-residue chain is SLIT-ROBO Rho GTPase-activating protein 2 (1071 aa).

The F-BAR domain occupies 22-325 (KEIRAQLTEQ…AVENLDATSD (304 aa)). The segment covering 181-203 (LKEAEKQEEKQIGKSVKQEDRQT) has biased composition (basic and acidic residues). The disordered stretch occupies residues 181 to 211 (LKEAEKQEEKQIGKSVKQEDRQTPRSPDSTA). Position 206 is a phosphoserine (serine 206). A coiled-coil region spans residues 362–401 (VQSELVQRCQQLQSRLSTLKIENEEVKKTMEATLQTIQDI). 4 positions are modified to phosphoserine: serine 427, serine 500, serine 691, and serine 695. The Rho-GAP domain maps to 489-679 (ARRSSTVRKQ…TIIIQHENIF (191 aa)). Positions 698-726 (DYCDSPHGETTSVEDSTQDVTAEHHTSDD) are disordered. Over residues 705-717 (GETTSVEDSTQDV) the composition is skewed to polar residues. Serine 724 is subject to Phosphoserine. In terms of domain architecture, SH3 spans 728–787 (CEPIEAIAKFDYVGRTARELSFKKGASLLLYQRASDDWWEGRHNGIDGLIPHQYIVVQDT). Position 795 is a phosphoserine (serine 795). Positions 837-936 (QRKRPESGSI…RSKSFNNHRP (100 aa)) are disordered. Over residues 855–866 (HGLSSSLTDSSS) the composition is skewed to low complexity. Composition is skewed to polar residues over residues 874–885 (RPSSQPIMSQSL) and 897–907 (GHGSLNSISRH). A Phosphoserine modification is found at serine 916. A compositionally biased stretch (polar residues) spans 919-933 (IRKTATAGRSKSFNN). Arginine 927 carries the post-translational modification Symmetric dimethylarginine; by PRMT5. The residue at position 930 (serine 930) is a Phosphoserine. The stretch at 940–967 (EVIAQDIEATMNSALNELRELERQSSVK) forms a coiled coil. The segment at 983 to 1012 (SPVVAPTSEPSSPLHTQLLKDPEPAFQRSA) is disordered. 4 positions are modified to phosphoserine: serine 990, serine 994, serine 1013, and serine 1027. Positions 1029–1071 (KMAAPVKPPATRPKPTVFPKTNATSPGVNSSTSPQSTDKSCTV) are disordered. Over residues 1047–1071 (PKTNATSPGVNSSTSPQSTDKSCTV) the composition is skewed to polar residues.

In terms of assembly, homodimer. Heterodimer; forms a heterodimer with SRGAP2C, altering SRGAP2 function. Forms a heterooligomer with SRGAP1 and SRGAP3 through its F-BAR domain. Interacts (via SH3 domain) with GPHN. Interacts (via SH3 domain) with FMNL1 (activated by RAC1); regulates the actin filament severing activity of FMNL1 and actin dynamics. Interacts (via SH3 domain) with FMNL3. Interacts with RAC1; specifically stimulates RAC1 GTPase activity. Interacts (via F-BAR domain) with HOMER1. Interacts with ROBO1 and ROBO2. Interacts with FASLG. Interacts with PRMT5. In terms of processing, methylation at Arg-927 is required for the stimulation of cell migration, dimerization and localization at the plasma membrane protrusions.

It is found in the cell membrane. Its subcellular location is the cell projection. It localises to the dendritic spine. The protein resides in the postsynaptic density. The protein localises to the postsynaptic cell membrane. It is found in the lamellipodium. Its subcellular location is the cytoplasmic vesicle. It localises to the phagosome. The protein resides in the nucleus. The protein localises to the cytoplasm. It is found in the cytosol. With respect to regulation, activity is strongly inhibited by SRGAP2C, which heterodimerize with SRGAP2/SRGAP2A, thereby reducing SRGAP2/SRGAP2A levels through proteasome-dependent degradation. Functionally, postsynaptic RAC1 GTPase activating protein (GAP) that plays a key role in neuronal morphogenesis and migration mainly during development of the cerebral cortex. Regulates excitatory and inhibitory synapse maturation and density in cortical pyramidal neurons. SRGAP2/SRGAP2A limits excitatory and inhibitory synapse density through its RAC1-specific GTPase activating activity, while it promotes maturation of both excitatory and inhibitory synapses through its ability to bind to the postsynaptic scaffolding protein HOMER1 at excitatory synapses, and the postsynaptic protein GPHN at inhibitory synapses. Mechanistically, acts by binding and deforming membranes, thereby regulating actin dynamics to regulate cell migration and differentiation. Promotes cell repulsion and contact inhibition of locomotion: localizes to protrusions with curved edges and controls the duration of RAC1 activity in contact protrusions. In non-neuronal cells, may also play a role in cell migration by regulating the formation of lamellipodia and filopodia. The sequence is that of SLIT-ROBO Rho GTPase-activating protein 2 from Homo sapiens (Human).